The chain runs to 407 residues: Phosphopentomutase (407 aa).

Residues Asp10, Asp306, His311, Asp347, His348, and His359 each contribute to the Mn(2+) site.

It belongs to the phosphopentomutase family. Requires Mn(2+) as cofactor.

Its subcellular location is the cytoplasm. The catalysed reaction is 2-deoxy-alpha-D-ribose 1-phosphate = 2-deoxy-D-ribose 5-phosphate. It catalyses the reaction alpha-D-ribose 1-phosphate = D-ribose 5-phosphate. The protein operates within carbohydrate degradation; 2-deoxy-D-ribose 1-phosphate degradation; D-glyceraldehyde 3-phosphate and acetaldehyde from 2-deoxy-alpha-D-ribose 1-phosphate: step 1/2. Its function is as follows. Isomerase that catalyzes the conversion of deoxy-ribose 1-phosphate (dRib-1-P) and ribose 1-phosphate (Rib-1-P) to deoxy-ribose 5-phosphate (dRib-5-P) and ribose 5-phosphate (Rib-5-P), respectively. This Yersinia pestis bv. Antiqua (strain Antiqua) protein is Phosphopentomutase.